The primary structure comprises 395 residues: Protein-arginine rhamnosyltransferase (395 aa).

Residues N19–D22, Y205, Q272, and R288–S292 contribute to the dTDP-beta-L-rhamnose site. D22 acts as the Proton acceptor in catalysis. E290 is a catalytic residue.

This sequence belongs to the glycosyltransferase 104 family.

It catalyses the reaction dTDP-beta-L-rhamnose + L-arginyl-[protein] = N(omega)-(alpha-L-rhamnosyl)-L-arginyl-[protein] + dTDP + H(+). Functionally, protein-arginine rhamnosyltransferase that catalyzes the transfer of a single rhamnose to elongation factor P (EF-P) on 'Lys-32', a modification required for EF-P-dependent rescue of polyproline stalled ribosomes. This Shewanella oneidensis (strain ATCC 700550 / JCM 31522 / CIP 106686 / LMG 19005 / NCIMB 14063 / MR-1) protein is Protein-arginine rhamnosyltransferase.